We begin with the raw amino-acid sequence, 356 residues long: Phosphate acyltransferase (356 aa).

This sequence belongs to the PlsX family. In terms of assembly, homodimer. Probably interacts with PlsY.

It localises to the cytoplasm. The enzyme catalyses a fatty acyl-[ACP] + phosphate = an acyl phosphate + holo-[ACP]. It participates in lipid metabolism; phospholipid metabolism. Its function is as follows. Catalyzes the reversible formation of acyl-phosphate (acyl-PO(4)) from acyl-[acyl-carrier-protein] (acyl-ACP). This enzyme utilizes acyl-ACP as fatty acyl donor, but not acyl-CoA. This is Phosphate acyltransferase from Stutzerimonas stutzeri (strain A1501) (Pseudomonas stutzeri).